A 762-amino-acid polypeptide reads, in one-letter code: ATP-dependent RNA helicase SUV3 homolog, mitochondrial (762 aa).

Residues 1 to 36 (MQNTRRCISLICVTRQPPSLRATYGAVAAARCLHRA) constitute a mitochondrion transit peptide. Residues 181–321 (NARALTRKIV…ALELLQKICE (141 aa)) form the Helicase ATP-binding domain. 194–201 (GPTNSGKT) serves as a coordination point for ATP. The region spanning 331-508 (RYDRLTELTV…PTADQIELYA (178 aa)) is the Helicase C-terminal domain. A disordered region spans residues 716–762 (EWDAQQVGQAAAASTSSKESQESPPDDSDDEDSYPGSYKKTRRKRRK). The segment covering 721-730 (QVGQAAAAST) has biased composition (polar residues). A compositionally biased stretch (acidic residues) spans 739–748 (PPDDSDDEDS).

This sequence belongs to the helicase family. The cofactor is Mg(2+). Mn(2+) is required as a cofactor.

The protein localises to the mitochondrion. It catalyses the reaction ATP + H2O = ADP + phosphate + H(+). In terms of biological role, major helicase player in mitochondrial RNA metabolism and maintenance. Likely component of the mitochondrial degradosome (mtEXO) complex, that degrades 3' overhang double-stranded RNA with a 3'-to-5' directionality in an ATP-dependent manner. ATPase and ATP-dependent multisubstrate helicase, able to unwind double-stranded (ds) DNA and RNA, and RNA/DNA heteroduplexes in the 5'-to-3' direction. Regulates mRNA stability and is required for the correct processing and maturation of mitochondrial transcripts. This chain is ATP-dependent RNA helicase SUV3 homolog, mitochondrial, found in Drosophila pseudoobscura pseudoobscura (Fruit fly).